The primary structure comprises 87 residues: MMKKLLIVSVKAYQKYISPLSPPSCRYKPTCSAYMLTAIEKHGTKGILMGIARILRCHPFVAGGVDPVPEDFSLMRNKNTSKNAEKA.

It belongs to the UPF0161 family.

The protein resides in the cell membrane. In terms of biological role, could be involved in insertion of integral membrane proteins into the membrane. In Streptococcus pyogenes serotype M12 (strain MGAS2096), this protein is Putative membrane protein insertion efficiency factor.